The sequence spans 323 residues: Elongation factor P--(R)-beta-lysine ligase (323 aa).

74-76 (SPE) serves as a coordination point for substrate. Residues 98-100 (RNE) and Asn-107 each bind ATP. Tyr-116 lines the substrate pocket. 242 to 243 (EL) contributes to the ATP binding site. Position 249 (Glu-249) interacts with substrate. Gly-298 lines the ATP pocket.

This sequence belongs to the class-II aminoacyl-tRNA synthetase family. EpmA subfamily. Homodimer.

The enzyme catalyses D-beta-lysine + L-lysyl-[protein] + ATP = N(6)-((3R)-3,6-diaminohexanoyl)-L-lysyl-[protein] + AMP + diphosphate + H(+). Functionally, with EpmB is involved in the beta-lysylation step of the post-translational modification of translation elongation factor P (EF-P). Catalyzes the ATP-dependent activation of (R)-beta-lysine produced by EpmB, forming a lysyl-adenylate, from which the beta-lysyl moiety is then transferred to the epsilon-amino group of a conserved specific lysine residue in EF-P. In Vibrio campbellii (strain ATCC BAA-1116), this protein is Elongation factor P--(R)-beta-lysine ligase.